The sequence spans 134 residues: Auxin-responsive protein SAUR40 (134 aa).

Belongs to the ARG7 family. As to quaternary structure, interacts with and inhibits PP2C-D subfamily of type 2C phosphatases such as PP2C67/PP2C-D1.

It localises to the cytoplasm. In terms of biological role, provide a mechanistic link between auxin and plasma membrane H(+)-ATPases (PM H(+)-ATPases, e.g. AHA1 and AHA2), and triggers PM H(+)-ATPases activity by promoting phosphorylation of their C-terminal autoinhibitory domain as a result of PP2C-D subfamily of type 2C phosphatases inhibition, thus leading to the acidification of the apoplast and the facilitation of solutes and water uptake to drive cell expansion. Plays a role in the regulation of cell expansion, root meristem patterning and auxin transport. This is Auxin-responsive protein SAUR40 from Arabidopsis thaliana (Mouse-ear cress).